A 278-amino-acid chain; its full sequence is Formamidopyrimidine-DNA glycosylase (278 aa).

Proline 2 serves as the catalytic Schiff-base intermediate with DNA. Residue glutamate 3 is the Proton donor of the active site. Residue lysine 58 is the Proton donor; for beta-elimination activity of the active site. Residues histidine 91, arginine 109, and arginine 158 each contribute to the DNA site. The FPG-type zinc-finger motif lies at 243 to 277 (KVYDRKGLPCKVCKTPISQMVQGQRTTYFCSQCQK). The active-site Proton donor; for delta-elimination activity is arginine 267.

Belongs to the FPG family. Monomer. Zn(2+) serves as cofactor.

It carries out the reaction Hydrolysis of DNA containing ring-opened 7-methylguanine residues, releasing 2,6-diamino-4-hydroxy-5-(N-methyl)formamidopyrimidine.. It catalyses the reaction 2'-deoxyribonucleotide-(2'-deoxyribose 5'-phosphate)-2'-deoxyribonucleotide-DNA = a 3'-end 2'-deoxyribonucleotide-(2,3-dehydro-2,3-deoxyribose 5'-phosphate)-DNA + a 5'-end 5'-phospho-2'-deoxyribonucleoside-DNA + H(+). Its function is as follows. Involved in base excision repair of DNA damaged by oxidation or by mutagenic agents. Acts as a DNA glycosylase that recognizes and removes damaged bases. Has a preference for oxidized purines, such as 7,8-dihydro-8-oxoguanine (8-oxoG). Has AP (apurinic/apyrimidinic) lyase activity and introduces nicks in the DNA strand. Cleaves the DNA backbone by beta-delta elimination to generate a single-strand break at the site of the removed base with both 3'- and 5'-phosphates. The protein is Formamidopyrimidine-DNA glycosylase of Polynucleobacter necessarius subsp. necessarius (strain STIR1).